The primary structure comprises 209 residues: Putative thymidylate synthase (209 aa).

Cys137 is a catalytic residue.

It belongs to the thymidylate synthase family. Archaeal-type ThyA subfamily. In terms of assembly, monomer.

It localises to the cytoplasm. It functions in the pathway pyrimidine metabolism; dTTP biosynthesis. Functionally, may catalyze the biosynthesis of dTMP using an unknown cosubstrate. The protein is Putative thymidylate synthase of Methanopyrus kandleri (strain AV19 / DSM 6324 / JCM 9639 / NBRC 100938).